A 756-amino-acid polypeptide reads, in one-letter code: Anaphase-promoting complex subunit 5 (756 aa).

TPR repeat units lie at residues Arg301–Ser334, Asp522–Asn555, Ile581–Tyr614, and Tyr678–Arg711.

Belongs to the APC5 family. The APC/C is composed of at least 12 subunits.

The protein localises to the nucleus. Its subcellular location is the cytoplasm. The protein resides in the cytoskeleton. It is found in the spindle. The protein operates within protein modification; protein ubiquitination. Its function is as follows. Component of the anaphase promoting complex/cyclosome (APC/C), a cell cycle-regulated E3 ubiquitin ligase that controls progression through mitosis and the G1 phase of the cell cycle. The APC/C complex acts by mediating ubiquitination and subsequent degradation of target proteins: it mainly mediates the formation of 'Lys-11'-linked polyubiquitin chains and, to a lower extent, the formation of 'Lys-48'- and 'Lys-63'-linked polyubiquitin chains. The APC/C complex catalyzes assembly of branched 'Lys-11'-/'Lys-48'-linked branched ubiquitin chains on target proteins. The protein is Anaphase-promoting complex subunit 5 (ANAPC5) of Gallus gallus (Chicken).